We begin with the raw amino-acid sequence, 685 residues long: Hemocyanin subunit X (685 aa).

The signal sequence occupies residues 1-20; the sequence is MKYCTESLILILAVIGCISA. His-210, His-214, and His-243 together coordinate Cu cation. Asn-329 is a glycosylation site (N-linked (GlcNAc...) asparagine). 3 residues coordinate Cu cation: His-367, His-371, and His-407. Cys-577 and Cys-625 form a disulfide bridge.

Belongs to the tyrosinase family. Hemocyanin subfamily.

It is found in the secreted. Its subcellular location is the extracellular space. Functionally, hemocyanins are copper-containing oxygen carriers occurring freely dissolved in the hemolymph of many mollusks and arthropods. The protein is Hemocyanin subunit X (HCX) of Scutigera coleoptrata (House centipede).